Reading from the N-terminus, the 227-residue chain is NADH-quinone oxidoreductase subunit C (227 aa).

The protein belongs to the complex I 30 kDa subunit family. NDH-1 is composed of 14 different subunits. Subunits NuoB, C, D, E, F, and G constitute the peripheral sector of the complex.

The protein localises to the cell inner membrane. It catalyses the reaction a quinone + NADH + 5 H(+)(in) = a quinol + NAD(+) + 4 H(+)(out). Functionally, NDH-1 shuttles electrons from NADH, via FMN and iron-sulfur (Fe-S) centers, to quinones in the respiratory chain. The immediate electron acceptor for the enzyme in this species is believed to be ubiquinone. Couples the redox reaction to proton translocation (for every two electrons transferred, four hydrogen ions are translocated across the cytoplasmic membrane), and thus conserves the redox energy in a proton gradient. This is NADH-quinone oxidoreductase subunit C from Legionella pneumophila (strain Lens).